A 219-amino-acid chain; its full sequence is Zinc finger C2HC domain-containing protein 1B (219 aa).

C2HC/C3H-type zinc fingers lie at residues 14–43 (ELFP…LFNK) and 117–146 (DYIQ…QESR). Zn(2+)-binding residues include C18, C21, H33, C37, C121, C124, H136, and C140. Residues 190–219 (EASAAPTRPAVDPASGAKLRQGFAKSSKKD) are disordered.

The protein belongs to the ZC2HC1 family. Requires Zn(2+) as cofactor.

The chain is Zinc finger C2HC domain-containing protein 1B (ZC2HC1B) from Bos taurus (Bovine).